We begin with the raw amino-acid sequence, 212 residues long: Pyridoxine/pyridoxamine 5'-phosphate oxidase (212 aa).

Substrate-binding positions include 8 to 11 and Lys66; that span reads RRTY. Residues 61 to 66, 76 to 77, Arg82, Lys83, and Gln105 each bind FMN; these read RIVLLK and FT. The substrate site is built by Tyr123, Arg127, and Ser131. FMN-binding positions include 140–141 and Trp184; that span reads QS. 190 to 192 lines the substrate pocket; that stretch reads RLH. Residue Arg194 participates in FMN binding.

Belongs to the pyridoxamine 5'-phosphate oxidase family. In terms of assembly, homodimer. It depends on FMN as a cofactor.

It carries out the reaction pyridoxamine 5'-phosphate + O2 + H2O = pyridoxal 5'-phosphate + H2O2 + NH4(+). It catalyses the reaction pyridoxine 5'-phosphate + O2 = pyridoxal 5'-phosphate + H2O2. It functions in the pathway cofactor metabolism; pyridoxal 5'-phosphate salvage; pyridoxal 5'-phosphate from pyridoxamine 5'-phosphate: step 1/1. Its pathway is cofactor metabolism; pyridoxal 5'-phosphate salvage; pyridoxal 5'-phosphate from pyridoxine 5'-phosphate: step 1/1. Its function is as follows. Catalyzes the oxidation of either pyridoxine 5'-phosphate (PNP) or pyridoxamine 5'-phosphate (PMP) into pyridoxal 5'-phosphate (PLP). In Cupriavidus taiwanensis (strain DSM 17343 / BCRC 17206 / CCUG 44338 / CIP 107171 / LMG 19424 / R1) (Ralstonia taiwanensis (strain LMG 19424)), this protein is Pyridoxine/pyridoxamine 5'-phosphate oxidase.